Reading from the N-terminus, the 135-residue chain is Lactoylglutathione lyase (135 aa).

The region spanning 2-126 (RLLHTMLRVG…DGYKIELIEE (125 aa)) is the VOC domain. H5 lines the Ni(2+) pocket. R9 is a substrate binding site. A Ni(2+)-binding site is contributed by E56. Residues N60 and H74 each contribute to the substrate site. Ni(2+) is bound by residues H74 and E122. Residue E122 is the Proton donor/acceptor of the active site.

It belongs to the glyoxalase I family. Homodimer. Requires Ni(2+) as cofactor.

The catalysed reaction is (R)-S-lactoylglutathione = methylglyoxal + glutathione. The protein operates within secondary metabolite metabolism; methylglyoxal degradation; (R)-lactate from methylglyoxal: step 1/2. Its function is as follows. Catalyzes the conversion of hemimercaptal, formed from methylglyoxal and glutathione, to S-lactoylglutathione. This Escherichia coli O157:H7 protein is Lactoylglutathione lyase (gloA).